The chain runs to 89 residues: Small ribosomal subunit protein uS19 (89 aa).

This sequence belongs to the universal ribosomal protein uS19 family.

Protein S19 forms a complex with S13 that binds strongly to the 16S ribosomal RNA. The sequence is that of Small ribosomal subunit protein uS19 from Xanthomonas campestris pv. campestris (strain 8004).